We begin with the raw amino-acid sequence, 156 residues long: Ribosomal RNA large subunit methyltransferase H (156 aa).

Residues Leu-73, Gly-104, and 123–128 (LSALTL) each bind S-adenosyl-L-methionine.

It belongs to the RNA methyltransferase RlmH family. As to quaternary structure, homodimer.

Its subcellular location is the cytoplasm. The enzyme catalyses pseudouridine(1915) in 23S rRNA + S-adenosyl-L-methionine = N(3)-methylpseudouridine(1915) in 23S rRNA + S-adenosyl-L-homocysteine + H(+). Functionally, specifically methylates the pseudouridine at position 1915 (m3Psi1915) in 23S rRNA. This Shewanella sp. (strain MR-7) protein is Ribosomal RNA large subunit methyltransferase H.